The sequence spans 339 residues: Phytoene synthase (339 aa).

It belongs to the phytoene/squalene synthase family. ATP is required as a cofactor. The cofactor is Mn(2+). Requires Mg(2+) as cofactor.

It participates in carotenoid biosynthesis; phytoene biosynthesis. Functionally, involved in the biosynthesis of carotenoids. Catalyzes the condensation of two molecules of geranylgeranyl diphosphate (GGPP) to give prephytoene diphosphate (PPPP) and the subsequent rearrangement of the cyclopropylcarbinyl intermediate to yield phytoene. The chain is Phytoene synthase (crtB) from Rhodobacter capsulatus (strain ATCC BAA-309 / NBRC 16581 / SB1003).